Consider the following 599-residue polypeptide: Elongation factor 4 (599 aa).

Residues 5–187 (SHIRNFSIIA…RLVQTIPAPT (183 aa)) enclose the tr-type G domain. GTP-binding positions include 17 to 22 (DHGKST) and 134 to 137 (NKMD).

The protein belongs to the TRAFAC class translation factor GTPase superfamily. Classic translation factor GTPase family. LepA subfamily.

It is found in the cell inner membrane. The enzyme catalyses GTP + H2O = GDP + phosphate + H(+). In terms of biological role, required for accurate and efficient protein synthesis under certain stress conditions. May act as a fidelity factor of the translation reaction, by catalyzing a one-codon backward translocation of tRNAs on improperly translocated ribosomes. Back-translocation proceeds from a post-translocation (POST) complex to a pre-translocation (PRE) complex, thus giving elongation factor G a second chance to translocate the tRNAs correctly. Binds to ribosomes in a GTP-dependent manner. The chain is Elongation factor 4 from Ectopseudomonas mendocina (strain ymp) (Pseudomonas mendocina).